Consider the following 522-residue polypeptide: Glutamate--cysteine ligase (522 aa).

Belongs to the glutamate--cysteine ligase type 1 family. Type 1 subfamily.

The enzyme catalyses L-cysteine + L-glutamate + ATP = gamma-L-glutamyl-L-cysteine + ADP + phosphate + H(+). The protein operates within sulfur metabolism; glutathione biosynthesis; glutathione from L-cysteine and L-glutamate: step 1/2. The chain is Glutamate--cysteine ligase from Shewanella pealeana (strain ATCC 700345 / ANG-SQ1).